Here is a 190-residue protein sequence, read N- to C-terminus: Isopentenyl-diphosphate Delta-isomerase (190 aa).

Mn(2+)-binding residues include histidine 27 and histidine 34. In terms of domain architecture, Nudix hydrolase spans 32–166 (ALHLAFSCHV…PWAFSPWLTL (135 aa)). Residue cysteine 69 is part of the active site. Histidine 71 serves as a coordination point for Mn(2+). Glutamate 89 lines the Mg(2+) pocket. The Mn(2+) site is built by glutamate 116 and glutamate 118. Glutamate 118 is an active-site residue.

It belongs to the IPP isomerase type 1 family. The cofactor is Mg(2+). It depends on Mn(2+) as a cofactor.

The protein localises to the cytoplasm. The enzyme catalyses isopentenyl diphosphate = dimethylallyl diphosphate. It participates in isoprenoid biosynthesis; dimethylallyl diphosphate biosynthesis; dimethylallyl diphosphate from isopentenyl diphosphate: step 1/1. In terms of biological role, catalyzes the 1,3-allylic rearrangement of the homoallylic substrate isopentenyl (IPP) to its highly electrophilic allylic isomer, dimethylallyl diphosphate (DMAPP). The chain is Isopentenyl-diphosphate Delta-isomerase from Clavibacter sepedonicus (Clavibacter michiganensis subsp. sepedonicus).